We begin with the raw amino-acid sequence, 325 residues long: Probable cell division protein WhiA (325 aa).

A DNA-binding region (H-T-H motif) is located at residues 280 to 313; sequence SLKELGNMLEKPLGKSGVNHRLRKIDKIAEELRK.

Belongs to the WhiA family.

Its function is as follows. Involved in cell division and chromosome segregation. The chain is Probable cell division protein WhiA from Caldicellulosiruptor bescii (strain ATCC BAA-1888 / DSM 6725 / KCTC 15123 / Z-1320) (Anaerocellum thermophilum).